Reading from the N-terminus, the 371-residue chain is Carlactonoate CLA methyltransferase (371 aa).

Residue Y21 participates in S-adenosyl-L-homocysteine binding. Q28 is a binding site for (11R)-carlactonoate. S-adenosyl-L-homocysteine-binding residues include C62, N67, D101, L102, S141, and F142. (11R)-carlactonoate contacts are provided by H162 and W163. 4 residues coordinate Mg(2+): N180, D266, Y268, and D269.

The protein belongs to the methyltransferase superfamily. Type-7 methyltransferase family. SABATH subfamily. As to quaternary structure, homodimer. It depends on Mg(2+) as a cofactor.

The enzyme catalyses (11R)-carlactonoate + S-adenosyl-L-methionine = (11R)-methyl carlactonoate + S-adenosyl-L-homocysteine. Functionally, methyltransferase involved in the biosynthesis of strigolactone natural products, bioactive compounds promoting plant fitness and soil microbe interactions, but preventing shoot branching. Catalyzes the biosynthesis of (11R)-methyl carlactonoate (MeCLA) from (11R)-carlactonoate (CLA), downstream of MAX1; MeCLA is probably biologically active as a hormone regulating shoot branching and serves as a precursor of non-canonical strigolactones (SLs). The protein is Carlactonoate CLA methyltransferase of Arabidopsis thaliana (Mouse-ear cress).